The chain runs to 148 residues: UPF0178 protein BH16190 (148 aa).

Belongs to the UPF0178 family.

In Bartonella henselae (strain ATCC 49882 / DSM 28221 / CCUG 30454 / Houston 1) (Rochalimaea henselae), this protein is UPF0178 protein BH16190.